The following is a 229-amino-acid chain: MNNNIILQCINLTKSFYRKKEEIRTLNKISLKIRKGDITFITGKSGSGKSTLLHLLGGLDKPTSGSILFDGVSLHSMSSNEIAKLRNLKLGFIFQFHHLLLDFNVLENIAIPSLISKKSIQESKEKSYEILKKVHLEKKINKYPSELSGGERQRVAIARALVNQPSLVIADEPTSHLDKNNAKIIFDLIFELNSNLNTSFLIVSHDLRFIKKAPILLEMKNGQLFNNKN.

The ABC transporter domain occupies 7 to 229; sequence LQCINLTKSF…KNGQLFNNKN (223 aa). 43 to 50 is a binding site for ATP; sequence GKSGSGKS.

It belongs to the ABC transporter superfamily. Lipoprotein translocase (TC 3.A.1.125) family. The complex is composed of two ATP-binding proteins (LolD) and two transmembrane proteins (LolC and LolE).

It localises to the cell inner membrane. Functionally, part of the ABC transporter complex LolCDE involved in the translocation of mature outer membrane-directed lipoproteins, from the inner membrane to the periplasmic chaperone, LolA. Responsible for the formation of the LolA-lipoprotein complex in an ATP-dependent manner. The polypeptide is Lipoprotein-releasing system ATP-binding protein LolD (Buchnera aphidicola subsp. Schizaphis graminum (strain Sg)).